A 120-amino-acid polypeptide reads, in one-letter code: MTIRAYVGLGSNLDSPAEQLRSAFQALDQVEATRLVAASALYTSDSLLPGQPXYTNAVAALDTALAPLALLDALQAIENDQGXVRKERWGPRTLDLDILLFSDQVLDQPRLKVPHYHMHA.

It belongs to the HPPK family.

The catalysed reaction is 6-hydroxymethyl-7,8-dihydropterin + ATP = (7,8-dihydropterin-6-yl)methyl diphosphate + AMP + H(+). Its pathway is cofactor biosynthesis; tetrahydrofolate biosynthesis; 2-amino-4-hydroxy-6-hydroxymethyl-7,8-dihydropteridine diphosphate from 7,8-dihydroneopterin triphosphate: step 4/4. Catalyzes the transfer of pyrophosphate from adenosine triphosphate (ATP) to 6-hydroxymethyl-7,8-dihydropterin, an enzymatic step in folate biosynthesis pathway. This is 2-amino-4-hydroxy-6-hydroxymethyldihydropteridine pyrophosphokinase (folK) from Pseudomonas putida (Arthrobacter siderocapsulatus).